Consider the following 126-residue polypeptide: Small ribosomal subunit protein uS13 (126 aa).

Residues 95 to 126 (GLPVRGQQTRTNARTRKGKRKTVGGTKKAKAK) form a disordered region. The segment covering 107 to 126 (ARTRKGKRKTVGGTKKAKAK) has biased composition (basic residues).

Belongs to the universal ribosomal protein uS13 family. In terms of assembly, part of the 30S ribosomal subunit. Forms a loose heterodimer with protein S19. Forms two bridges to the 50S subunit in the 70S ribosome.

In terms of biological role, located at the top of the head of the 30S subunit, it contacts several helices of the 16S rRNA. In the 70S ribosome it contacts the 23S rRNA (bridge B1a) and protein L5 of the 50S subunit (bridge B1b), connecting the 2 subunits; these bridges are implicated in subunit movement. Contacts the tRNAs in the A and P-sites. This Aquifex aeolicus (strain VF5) protein is Small ribosomal subunit protein uS13.